The primary structure comprises 725 residues: Ophiobolin F synthase (725 aa).

A (7Z)-ophiobola-7,19-dien-3-ol synthase region spans residues 1 to 322; the sequence is MEYKYSTIVD…RYHADAKFNE (322 aa). Mg(2+)-binding residues include aspartate 93 and aspartate 97. A substrate-binding site is contributed by aspartate 93. Positions 93 to 97 match the DDXXD 1 motif; it reads DDEID. Substrate is bound by residues 182–185, asparagine 226, 230–234, and 313–314; these read RCMD, SYEKE, and RY. The NSE/DTE signature appears at 226-234; the sequence is NDLFSYEKE. The geranylfarnesyl diphosphate synthase stretch occupies residues 323–725; that stretch reads LQMLRAEHGV…LRMMLELLKV (403 aa). The tract at residues 362 to 388 is disordered; the sequence is GVNGVNGKRKRSGEETADDARTNGNGI. Residues 373-382 are compositionally biased toward basic and acidic residues; sequence SGEETADDAR. Residues lysine 436, arginine 439, and histidine 468 each coordinate isopentenyl diphosphate. Residues aspartate 475 and aspartate 479 each contribute to the Mg(2+) site. Residues 475 to 479 carry the DDXXD 2 motif; the sequence is DDIED. A dimethylallyl diphosphate-binding site is contributed by arginine 484. An isopentenyl diphosphate-binding site is contributed by arginine 485. Residues lysine 562, threonine 563, glutamine 601, asparagine 608, lysine 618, and lysine 628 each coordinate dimethylallyl diphosphate.

It in the N-terminal section; belongs to the terpene synthase family. The protein in the C-terminal section; belongs to the FPP/GGPP synthase family. Mg(2+) serves as cofactor.

It catalyses the reaction isopentenyl diphosphate + (2E,6E)-farnesyl diphosphate = (2E,6E,10E)-geranylgeranyl diphosphate + diphosphate. It carries out the reaction isopentenyl diphosphate + (2E,6E,10E)-geranylgeranyl diphosphate = (2E,6E,10E,14E)-geranylfarnesyl diphosphate + diphosphate. The catalysed reaction is (2E,6E,10E,14E)-geranylfarnesyl diphosphate + H2O = ophiobolin F + diphosphate. It participates in secondary metabolite biosynthesis; terpenoid biosynthesis. Bifunctional sesterterpene synthase that converts isopentenyl diphosphate (IPP) and dimethylallyl diphosphate (DMAPP) into ophiobolin F. The C-terminal prenyltransferase (PT) domain of AcldOS converts isopentenyl diphosphate and dimethylallyl diphosphate into geranylfarnesyl diphosphate (GFPP), whereas the N-terminal terpene cyclase (TC) domain catalyzes the cyclization of GFPP to ophiobolin F. This chain is Ophiobolin F synthase, found in Aspergillus calidoustus.